Here is a 95-residue protein sequence, read N- to C-terminus: Large ribosomal subunit protein bL25 (95 aa).

The segment at 1–20 is disordered; the sequence is MSFKFNAEVRSKQGKGASRR.

It belongs to the bacterial ribosomal protein bL25 family. In terms of assembly, part of the 50S ribosomal subunit; part of the 5S rRNA/L5/L18/L25 subcomplex. Contacts the 5S rRNA. Binds to the 5S rRNA independently of L5 and L18.

Its function is as follows. This is one of the proteins that binds to the 5S RNA in the ribosome where it forms part of the central protuberance. The protein is Large ribosomal subunit protein bL25 of Histophilus somni (strain 129Pt) (Haemophilus somnus).